We begin with the raw amino-acid sequence, 125 residues long: Large ribosomal subunit protein bL12 (125 aa).

This sequence belongs to the bacterial ribosomal protein bL12 family. Homodimer. Part of the ribosomal stalk of the 50S ribosomal subunit. Forms a multimeric L10(L12)X complex, where L10 forms an elongated spine to which 2 to 4 L12 dimers bind in a sequential fashion. Binds GTP-bound translation factors.

Forms part of the ribosomal stalk which helps the ribosome interact with GTP-bound translation factors. Is thus essential for accurate translation. The protein is Large ribosomal subunit protein bL12 of Cereibacter sphaeroides (Rhodobacter sphaeroides).